A 380-amino-acid chain; its full sequence is Kappa-type opioid receptor (380 aa).

Residues Met1–Ala57 lie on the Extracellular side of the membrane. 2 N-linked (GlcNAc...) asparagine glycosylation sites follow: Asn25 and Asn39. A helical membrane pass occupies residues Ile58–Ile85. Residues Arg86 to Asn95 are Cytoplasmic-facing. A helical membrane pass occupies residues Ile96 to Tyr119. Topologically, residues Leu120–Lys132 are extracellular. Cysteines 131 and 210 form a disulfide. A helical transmembrane segment spans residues Ile133–Val154. The Cytoplasmic segment spans residues Asp155–Leu173. A helical transmembrane segment spans residues Lys174–Leu196. The Extracellular segment spans residues Gly197–Trp222. The helical transmembrane segment at Asp223–Thr247 threads the bilayer. Topologically, residues Leu248–Arg274 are cytoplasmic. Residues Leu275–Val296 traverse the membrane as a helical segment. Residues Glu297 to Ser311 lie on the Extracellular side of the membrane. The chain crosses the membrane as a helical span at residues Tyr312–Leu333. Residues Asp334–Val380 are Cytoplasmic-facing. Residue Cys345 is the site of S-palmitoyl cysteine attachment.

It belongs to the G-protein coupled receptor 1 family. Interacts with NHERF1. Interacts with GABARAPL1. In terms of tissue distribution, detected in brain and placenta.

The protein resides in the cell membrane. Its function is as follows. G-protein coupled opioid receptor that functions as a receptor for endogenous alpha-neoendorphins and dynorphins, but has low affinity for beta-endorphins. Also functions as a receptor for various synthetic opioids and for the psychoactive diterpene salvinorin A. Ligand binding causes a conformation change that triggers signaling via guanine nucleotide-binding proteins (G proteins) and modulates the activity of down-stream effectors, such as adenylate cyclase. Signaling leads to the inhibition of adenylate cyclase activity. Inhibits neurotransmitter release by reducing calcium ion currents and increasing potassium ion conductance. Plays a role in the perception of pain. Plays a role in mediating reduced physical activity upon treatment with synthetic opioids. Plays a role in the regulation of salivation in response to synthetic opioids. May play a role in arousal and regulation of autonomic and neuroendocrine functions. This chain is Kappa-type opioid receptor (OPRK1), found in Homo sapiens (Human).